Reading from the N-terminus, the 183-residue chain is Copper metallothionein 2 (183 aa).

Residues 1-35 (MAFNPNPEKTTSCCSTSKAQDKCTCPKGKCECETC) form a cys-rich copper-binding 1 region. Positions 36 to 45 (PKSTKTPGSG) are spacer B1. The segment at 46-79 (PCNCGVKEKVSTCGCNGSGAACTCPPGQCACDSC) is cys-rich copper-binding 2. The tract at residues 80 to 88 (PRKAKSVST) is spacer B2. A cys-rich copper-binding 3 region spans residues 89-110 (CGCGGSAAACSCPPGKCACDSC). The segment at 111 to 120 (PKQAQEKVSS) is spacer B3. Residues 121–142 (CACNGSGGACTCPPGKCSCSGC) are cys-rich copper-binding 4. Positions 143 to 156 (PAQAKENPADQPTT) are spacer B4. Residues 157-183 (CGCQGVGVACTCPPGQCACDGCPAKAK) form a cys-rich copper-binding 5 region.

Belongs to the metallothionein superfamily.

It localises to the cytoplasm. The protein localises to the cell cortex. In terms of biological role, copper metallothionein that protects the cell against copper toxicity by tightly chelating copper ions. Required for antioxidant-mediated growth rescue in the presence of fluconazole. Acts as a critical factors for lung colonization and virulence. This is Copper metallothionein 2 from Cryptococcus neoformans var. grubii serotype A (strain H99 / ATCC 208821 / CBS 10515 / FGSC 9487) (Filobasidiella neoformans var. grubii).